The following is an 843-amino-acid chain: Protein P (843 aa).

The terminal protein domain (TP) stretch occupies residues 1–177; that stretch reads MPLSYQHFRK…FCGSPYSWEQ (177 aa). Positions 178-346 are spacer; the sequence is ELQHGRLVFQ…YCLTHIVNLL (169 aa). The segment at 347–690 is polymerase/reverse transcriptase domain (RT); the sequence is EDWGPCTEHG…YLHLYPVARQ (344 aa). The Reverse transcriptase domain maps to 357–600; that stretch reads EHNIRIPRTP…YSLNFMGYVI (244 aa). Mg(2+) is bound by residues aspartate 429, aspartate 551, and aspartate 552.

This sequence belongs to the hepadnaviridae P protein family.

It carries out the reaction DNA(n) + a 2'-deoxyribonucleoside 5'-triphosphate = DNA(n+1) + diphosphate. It catalyses the reaction Endonucleolytic cleavage to 5'-phosphomonoester.. With respect to regulation, activated by host HSP70 and HSP40 in vitro to be able to bind the epsilon loop of the pgRNA. Because deletion of the RNase H region renders the protein partly chaperone-independent, the chaperones may be needed indirectly to relieve occlusion of the RNA-binding site by this domain. Inhibited by several reverse-transcriptase inhibitors: Lamivudine, Adefovir and Entecavir. In terms of biological role, multifunctional enzyme that converts the viral RNA genome into dsDNA in viral cytoplasmic capsids. This enzyme displays a DNA polymerase activity that can copy either DNA or RNA templates, and a ribonuclease H (RNase H) activity that cleaves the RNA strand of RNA-DNA heteroduplexes in a partially processive 3'- to 5'-endonucleasic mode. Neo-synthesized pregenomic RNA (pgRNA) are encapsidated together with the P protein, and reverse-transcribed inside the nucleocapsid. Initiation of reverse-transcription occurs first by binding the epsilon loop on the pgRNA genome, and is initiated by protein priming, thereby the 5'-end of (-)DNA is covalently linked to P protein. Partial (+)DNA is synthesized from the (-)DNA template and generates the relaxed circular DNA (RC-DNA) genome. After budding and infection, the RC-DNA migrates in the nucleus, and is converted into a plasmid-like covalently closed circular DNA (cccDNA). The activity of P protein does not seem to be necessary for cccDNA generation, and is presumably released from (+)DNA by host nuclear DNA repair machinery. This is Protein P from Hepatitis B virus genotype C subtype adr (isolate Japan/Nishioka/1983) (HBV-C).